We begin with the raw amino-acid sequence, 954 residues long: Valine--tRNA ligase (954 aa).

Residues 48-58 carry the 'HIGH' region motif; the sequence is PNVTGSLHMGH. The 'KMSKS' region signature appears at 560-564; sequence KMSKS. Lys563 contacts ATP. The stretch at 883-953 forms a coiled coil; that stretch reads AGFINKEAEL…LKQQYLAIEA (71 aa).

The protein belongs to the class-I aminoacyl-tRNA synthetase family. ValS type 1 subfamily. In terms of assembly, monomer.

The protein localises to the cytoplasm. It carries out the reaction tRNA(Val) + L-valine + ATP = L-valyl-tRNA(Val) + AMP + diphosphate. In terms of biological role, catalyzes the attachment of valine to tRNA(Val). As ValRS can inadvertently accommodate and process structurally similar amino acids such as threonine, to avoid such errors, it has a 'posttransfer' editing activity that hydrolyzes mischarged Thr-tRNA(Val) in a tRNA-dependent manner. The chain is Valine--tRNA ligase from Pasteurella multocida (strain Pm70).